The primary structure comprises 616 residues: Hemagglutinin-neuraminidase (616 aa).

The Intravirion portion of the chain corresponds to 1-26 (MDRAVSQVALENDEREAKNTWRLVFR). A helical transmembrane segment spans residues 27–47 (IAILLLTVVTLAISAAALAYS). Residues 48 to 616 (MEASTPSDLI…ELESYAASWP (569 aa)) lie on the Virion surface side of the membrane. Asn-119 is a glycosylation site (N-linked (GlcNAc...) asparagine; by host). The important for interaction with fusion/F protein stretch occupies residues 124 to 152 (GAPIHDPDYIGGIGKELIVDDASDVTSFY). 3 disulfides stabilise this stretch: Cys-172–Cys-196, Cys-186–Cys-247, and Cys-238–Cys-251. The interval 234–239 (NRKSCS) is involved in neuraminidase activity. Residues Asn-341 and Asn-433 are each glycosylated (N-linked (GlcNAc...) asparagine; by host). Cystine bridges form between Cys-344–Cys-461 and Cys-455–Cys-465. Asn-481, Asn-538, and Asn-600 each carry an N-linked (GlcNAc...) asparagine; by host glycan. A disulfide bridge links Cys-531 with Cys-542.

The protein belongs to the paramyxoviruses hemagglutinin-neuraminidase family. Homotetramer; composed of disulfide-linked homodimers. Interacts with F protein trimer. Interacts with host CG-1B; this interaction inhibits viral adsorption and replication rather than internalization.

It localises to the virion membrane. The protein resides in the host cell membrane. It carries out the reaction Hydrolysis of alpha-(2-&gt;3)-, alpha-(2-&gt;6)-, alpha-(2-&gt;8)- glycosidic linkages of terminal sialic acid residues in oligosaccharides, glycoproteins, glycolipids, colominic acid and synthetic substrates.. Mediates the viral entry into the host cell together with fusion/F protein. Attaches the virus to sialic acid-containing cell receptors and thereby initiates infection. Binding of HN protein to the receptor induces a conformational change that allows the F protein to trigger virion/cell membranes fusion. Functionally, neuraminidase activity ensures the efficient spread of the virus by dissociating the mature virions from the neuraminic acid containing glycoproteins. The protein is Hemagglutinin-neuraminidase (HN) of Newcastle disease virus (strain Chicken/Northern Ireland/Ulster/67) (NDV).